Reading from the N-terminus, the 429-residue chain is Keratin, type I cytoskeletal 47 kDa (429 aa).

The segment covering 1 to 16 has biased composition (low complexity); the sequence is MTSYRSSSASYYSGSS. A disordered region spans residues 1 to 20; sequence MTSYRSSSASYYSGSSSKGG. The head stretch occupies residues 1-69; sequence MTSYRSSSAS…EAASSSFGGN (69 aa). Residues 70 to 105 are coil 1A; it reads EKHAMQNLNDRLASYLEKVRALEATNSDLEGKIRNW. The IF rod domain occupies 70–385; it reads EKHAMQNLND…RLLEGELGQV (316 aa). Residues 106–127 form a linker 1 region; that stretch reads YDKQSDAGIGAGSKDYSKYFEI. A coil 1B region spans residues 128 to 219; sequence IAELRNKIRA…KNHEEEMSHA (92 aa). A linker 12 region spans residues 220 to 242; that stretch reads KSQSAGKVSVEMDAALGVDLTSI. A coil 2 region spans residues 243-381; it reads LNNMRADYEI…QTYRRLLEGE (139 aa). A tail region spans residues 382 to 429; the sequence is LGQVTTVANTSSVESKTESSSTSTTRTRMVKTIVEEVVDGKVVSSRVE. Residues 389–408 form a disordered region; the sequence is ANTSSVESKTESSSTSTTRT. The span at 391–408 shows a compositional bias: low complexity; that stretch reads TSSVESKTESSSTSTTRT.

This sequence belongs to the intermediate filament family. Heterotetramer of two type I and two type II keratins.

The chain is Keratin, type I cytoskeletal 47 kDa (xk81a1) from Xenopus laevis (African clawed frog).